The primary structure comprises 506 residues: MPTLYTDIEIPQLKISLKQPLGLFINNEFCPSSDGKTIETVNPATGEPITSFQAANEKDVDKAVKAARAAFDNVWSKTSSEQRGIYLSNLLKLIEEEQDTLAALETLDAGKPYHSNAKGDLAQILQLTRYFAGSADKFDKGATIPLTFNKFAYTLKVPFGVVAQIVPWNYPLAMACWKLQGALAAGNTVIIKPAENTSLSLLYFATLIKKAGFPPGVVNIVPGYGSLVGQALASHMDIDKISFTGSTKVGGFVLEASGQSNLKDVTLECGGKSPALVFEDADLDKAIDWIAAGIFYNSGQNCTANSRVYVQSSIYDKFVEKFKETAKKEWDVAGKFDPFDEKCIVGPVISSTQYDRIKSYIERGKREEKLDMFQTSEFPIGGAKGYFIPPTIFTDVPQTSKLLQDEIFGPVVVVSKFTNYDDALKLANDTCYGLASAVFTKDVKKAHMFARDIKAGTVWINSSNDEDVTVPFGGFKMSGIGRELGQSGVDTYLQTKAVHINLSLDN.

Glutamate 268 acts as the Proton acceptor in catalysis. Residue cysteine 302 is the Nucleophile of the active site.

This sequence belongs to the aldehyde dehydrogenase family.

The protein localises to the cytoplasm. It carries out the reaction an aldehyde + NAD(+) + H2O = a carboxylate + NADH + 2 H(+). The enzyme catalyses 3-aminopropanal + NAD(+) + H2O = beta-alanine + NADH + 2 H(+). Its function is as follows. Cytoplasmic aldehyde dehydrogenase involved in ethanol oxidation. Required for pantothenic acid production through the conversion of 3-aminopropanal to beta-alanine, an intermediate in pantothenic acid (vitamin B5) and coenzyme A (CoA) biosynthesis. In Saccharomyces cerevisiae (strain ATCC 204508 / S288c) (Baker's yeast), this protein is Aldehyde dehydrogenase [NAD(P)+] 1 (ALD2).